Consider the following 471-residue polypeptide: Mannose-1-phosphate guanylyltransferase (471 aa).

It belongs to the mannose-6-phosphate isomerase type 2 family.

The catalysed reaction is alpha-D-mannose 1-phosphate + GTP + H(+) = GDP-alpha-D-mannose + diphosphate. Its pathway is nucleotide-sugar biosynthesis; GDP-alpha-D-mannose biosynthesis; GDP-alpha-D-mannose from alpha-D-mannose 1-phosphate (GTP route): step 1/1. The protein operates within bacterial outer membrane biogenesis; LPS O-antigen biosynthesis. Involved in GDP-mannose biosynthesis which serves as the activated sugar nucleotide precursor for mannose residues in cell surface polysaccharides. This enzyme participates in synthesis of the LPS O9 antigen. This is Mannose-1-phosphate guanylyltransferase (manC) from Escherichia coli.